A 366-amino-acid polypeptide reads, in one-letter code: Anhydro-N-acetylmuramic acid kinase (366 aa).

12 to 19 lines the ATP pocket; sequence GTSLDGID.

The protein belongs to the anhydro-N-acetylmuramic acid kinase family.

The catalysed reaction is 1,6-anhydro-N-acetyl-beta-muramate + ATP + H2O = N-acetyl-D-muramate 6-phosphate + ADP + H(+). It functions in the pathway amino-sugar metabolism; 1,6-anhydro-N-acetylmuramate degradation. The protein operates within cell wall biogenesis; peptidoglycan recycling. In terms of biological role, catalyzes the specific phosphorylation of 1,6-anhydro-N-acetylmuramic acid (anhMurNAc) with the simultaneous cleavage of the 1,6-anhydro ring, generating MurNAc-6-P. Is required for the utilization of anhMurNAc either imported from the medium or derived from its own cell wall murein, and thus plays a role in cell wall recycling. This is Anhydro-N-acetylmuramic acid kinase from Nitrosospira multiformis (strain ATCC 25196 / NCIMB 11849 / C 71).